Here is a 308-residue protein sequence, read N- to C-terminus: Cysteine synthase (308 aa).

An N6-(pyridoxal phosphate)lysine modification is found at K45. Pyridoxal 5'-phosphate is bound by residues N75, 179–183 (GTGGT), and S267.

This sequence belongs to the cysteine synthase/cystathionine beta-synthase family. Homodimer. Forms CymR(2):CysK(2) or CymR(4):CysK(4) complexes in the absence of O-acetylserine. Requires pyridoxal 5'-phosphate as cofactor.

It catalyses the reaction O-acetyl-L-serine + hydrogen sulfide = L-cysteine + acetate. Its pathway is amino-acid biosynthesis; L-cysteine biosynthesis; L-cysteine from L-serine: step 2/2. Catalyzes the conversion of O-acetylserine to cysteine. Also acts as a sensor of cysteine availability in the signal transduction pathway modulating CymR activity. When cysteine is present, the pool of O-acetylserine (OAS) is low, which leads to the formation of a CymR-CysK complex and transcriptional repression of the CymR regulon occurs. In the absence of cysteine, the OAS pool is high and the CymR-CysK complex is mostly dissociated, leading to a faster dissociation of CymR from its DNA targets and the lifting of CymR-dependent repression. This is Cysteine synthase (cysK) from Bacillus subtilis (strain 168).